The primary structure comprises 306 residues: D-alanine--D-alanine ligase (306 aa).

An ATP-grasp domain is found at 104–303; sequence KMLWKAFGLP…FEQLVVKILE (200 aa). An ATP-binding site is contributed by 134 to 189; that stretch reads VAKLGLPLMVKPSLEGSSVGLTKVKAVEELKSAVEYALKFDNTILIEEWLAGDELT. Residues D257, E270, and N272 each coordinate Mg(2+).

The protein belongs to the D-alanine--D-alanine ligase family. Requires Mg(2+) as cofactor. It depends on Mn(2+) as a cofactor.

The protein localises to the cytoplasm. The enzyme catalyses 2 D-alanine + ATP = D-alanyl-D-alanine + ADP + phosphate + H(+). It functions in the pathway cell wall biogenesis; peptidoglycan biosynthesis. Cell wall formation. In Haemophilus influenzae (strain 86-028NP), this protein is D-alanine--D-alanine ligase.